The sequence spans 81 residues: U17-lycotoxin-Ls1a (81 aa).

An N-terminal signal peptide occupies residues 1 to 22 (MSSKVQAVLLLVGVITFLAVHA). The propeptide occupies 23–34 (QEELSENTESER). 3 disulfide bridges follow: C36-C51, C50-C67, and C58-C65.

It belongs to the neurotoxin 02 (plectoxin) family. In terms of tissue distribution, expressed by the venom gland.

Its subcellular location is the secreted. The chain is U17-lycotoxin-Ls1a from Lycosa singoriensis (Wolf spider).